A 395-amino-acid chain; its full sequence is Putative 8-amino-7-oxononanoate synthase (395 aa).

Arginine 23 is a substrate binding site. Residue 110 to 111 (GY) coordinates pyridoxal 5'-phosphate. Residue histidine 135 participates in substrate binding. Residues serine 182, 207-210 (DEAH), and 239-242 (TFSK) each bind pyridoxal 5'-phosphate. An N6-(pyridoxal phosphate)lysine modification is found at lysine 242. Threonine 356 lines the substrate pocket.

It belongs to the class-II pyridoxal-phosphate-dependent aminotransferase family. BioF subfamily. In terms of assembly, homodimer. Pyridoxal 5'-phosphate is required as a cofactor.

It catalyses the reaction 6-carboxyhexanoyl-[ACP] + L-alanine + H(+) = (8S)-8-amino-7-oxononanoate + holo-[ACP] + CO2. It functions in the pathway cofactor biosynthesis; biotin biosynthesis. Its function is as follows. Catalyzes the decarboxylative condensation of pimeloyl-[acyl-carrier protein] and L-alanine to produce 8-amino-7-oxononanoate (AON), [acyl-carrier protein], and carbon dioxide. This is Putative 8-amino-7-oxononanoate synthase (bioF) from Bacillus cereus (strain ATCC 10987 / NRS 248).